The following is a 320-amino-acid chain: NAD kinase (320 aa).

Asp-96 functions as the Proton acceptor in the catalytic mechanism. NAD(+)-binding positions include 96–97 (DG), Arg-101, 170–171 (NE), Asp-200, and 211–216 (TAYAFS).

This sequence belongs to the NAD kinase family. The cofactor is a divalent metal cation.

The protein resides in the cytoplasm. The enzyme catalyses NAD(+) + ATP = ADP + NADP(+) + H(+). Functionally, involved in the regulation of the intracellular balance of NAD and NADP, and is a key enzyme in the biosynthesis of NADP. Catalyzes specifically the phosphorylation on 2'-hydroxyl of the adenosine moiety of NAD to yield NADP. In Rhodococcus jostii (strain RHA1), this protein is NAD kinase.